Consider the following 154-residue polypeptide: D-ribose pyranase 2 (154 aa).

Histidine 20 serves as the catalytic Proton donor. Substrate-binding positions include aspartate 28, histidine 98, and 121–123 (WGN).

Belongs to the RbsD / FucU family. RbsD subfamily. In terms of assembly, homodecamer.

It is found in the cytoplasm. It carries out the reaction beta-D-ribopyranose = beta-D-ribofuranose. It participates in carbohydrate metabolism; D-ribose degradation; D-ribose 5-phosphate from beta-D-ribopyranose: step 1/2. Functionally, catalyzes the interconversion of beta-pyran and beta-furan forms of D-ribose. The protein is D-ribose pyranase 2 of Rubrobacter xylanophilus (strain DSM 9941 / JCM 11954 / NBRC 16129 / PRD-1).